We begin with the raw amino-acid sequence, 79 residues long: Large ribosomal subunit protein bL31c (79 aa).

Belongs to the bacterial ribosomal protein bL31 family. Type A subfamily. In terms of assembly, part of the 50S ribosomal subunit.

The protein resides in the plastid. It localises to the chloroplast. Its function is as follows. Binds the 23S rRNA. The chain is Large ribosomal subunit protein bL31c from Gracilaria tenuistipitata var. liui (Red alga).